The following is a 955-amino-acid chain: MDIEDKSSKMHCMKGKHVAIICGVVIAVGLILGLGLGLGLKPEACNPPEDNGLLSTKPPTTSTPNVTNPSGSSVFCSAKNDENGAWTNFRLPNYVQPVHYDLDLTPEMEAEVYTGMVNISIRLEEQTTRHLWLHLRETKITEMPQLRTSSGQVIEIKRCFGYEPQEYVVIEAEEDLRPGNYFLSMKFKGYLNGSLVGFYSTTYGENGKTKYIAATDHEPTDARKSFPCFDEPNKKATYTISITHEHDYEAISNMPVEKTISLDNKWTKTIFKKSVPMSTYLVAWAVHQFKYEERISSRGIPLRVYAQPQQINTTIYAANVTKVVFDYFENYFNMNYSLPKLDKIAIPDFGTGAMENWGLITYRETNLLYDSQESAASNKQRVAAVVAHELVHQWFGNIVTMDWWDDLWLNEGFASFFEFMGVNAKEEKWQMLDQILIDDLLPVLKDDSLVSSHPITVNVSSPDEITSVFDGISYSKGASILRMLEDWISPDHFRAGCQKYLTDHYFKNAKTDDFWKAMEEVSGKPVREVMDTWTRQMGYPVLKVDLNSTVTQQRFLLDPKADPSKPSSQFSYKWNIPVKWKEGNTSSITFYNKSELAGITIMQPSDLPPDSFLKVNKDHVGFYRVNYEPQVWRTLADIMMKDHQNFNLTDRAGFIDDAFALARAGLLKYADALNLTRYLQNETEYIPWQRAVVAVSYIGQMVEDDKALYPKFQRYFGSLVKPIASELKWENDEDHIKSLLRTTVLEFACNMDDPEALGNASLLFKNWTSGISLDVNLRLLVYRFGMQNSGDEQAWNYMFEKYRTATLAQEKEKLLYGLASVKNITLLNRFLNCIKNTTLIRSQDVFTVLRYISFNSYGKTMAWDWVRLNWEYLVKRYTLNDRNLGRLISRISGTFNTELQLWQMENFFERYPDAGAGEASRKQALETTKSNIEWLKQYRDDVATWLENSEQPNFV.

Residues 1–17 are Cytoplasmic-facing; it reads MDIEDKSSKMHCMKGKH. A helical; Signal-anchor for type II membrane protein transmembrane segment spans residues 18–38; it reads VAIICGVVIAVGLILGLGLGL. At 39–955 the chain is on the extracellular side; that stretch reads GLKPEACNPP…LENSEQPNFV (917 aa). Positions 49–69 are disordered; it reads EDNGLLSTKPPTTSTPNVTNP. Residues 55–69 are compositionally biased toward low complexity; it reads STKPPTTSTPNVTNP. 3 N-linked (GlcNAc...) asparagine glycosylation sites follow: asparagine 65, asparagine 118, and asparagine 192. Glutamate 218 is a substrate binding site. Residues asparagine 312, asparagine 319, and asparagine 335 are each glycosylated (N-linked (GlcNAc...) asparagine). 352-356 lines the substrate pocket; the sequence is GAMEN. Histidine 388 contacts Zn(2+). Glutamate 389 serves as the catalytic Proton acceptor. Positions 392 and 411 each coordinate Zn(2+). Residues asparagine 458, asparagine 547, asparagine 584, asparagine 592, asparagine 647, asparagine 674, asparagine 681, asparagine 759, asparagine 766, asparagine 823, and asparagine 836 are each glycosylated (N-linked (GlcNAc...) asparagine). Substrate is bound at residue arginine 882.

It belongs to the peptidase M1 family. Homodimer; disulfide-linked. It depends on Zn(2+) as a cofactor.

The protein localises to the cell membrane. It catalyses the reaction Release of N-terminal glutamate (and to a lesser extent aspartate) from a peptide.. Its activity is regulated as follows. The partially purified protein is inhibited by the aminopeptidase competitive inhibitors amastatin (Leu and acidic inhibitor), and bestatin (Leu inhibitor), by chelating agents EDTA, and 1,10-Phenanthroline, as well as by Zn(2+) ions. Substrate specificity is modulated by Ca(2+), Ba(2+), and Mn(2+) ions which enhances the enzymatic activity for cleavage of acidic residues. In terms of biological role, venom protein that cleaves N-terminal acidic residues from peptides with high potency in presence of calcium. It may have several roles in venom including alteration of blood pressure by cleaving circulating angiotensin-2, general degradation of host tissue, increase of permeability to other venom components, and/or processing of other toxins in the venom. The polypeptide is Aminopeptidase A (Gloydius brevicauda (Korean slamosa snake)).